Reading from the N-terminus, the 267-residue chain is Malonyl-[acyl-carrier protein] O-methyltransferase (267 aa).

This sequence belongs to the methyltransferase superfamily.

It catalyses the reaction malonyl-[ACP] + S-adenosyl-L-methionine = malonyl-[ACP] methyl ester + S-adenosyl-L-homocysteine. Its pathway is cofactor biosynthesis; biotin biosynthesis. Functionally, converts the free carboxyl group of a malonyl-thioester to its methyl ester by transfer of a methyl group from S-adenosyl-L-methionine (SAM). It allows to synthesize pimeloyl-ACP via the fatty acid synthetic pathway. The chain is Malonyl-[acyl-carrier protein] O-methyltransferase from Yersinia pestis.